The sequence spans 1031 residues: MFYSQFILAKKGPLGTIWIAAHLERKLRKNQVADTDIGVSVDSILFPEAPIALRLSSHLLLGVVRIYSRKVNYLFDDCSEALLKVKQAFRSAAVDLPPEESTAPYHSITLPETFDLDDFELPDNEIFQGNYVDHHVSTKEQITLQDTMDGVVYSTSQFGLDERFGDGDTSQAALDLDEAVFQDKDVIGSDDEGVPGIDHNAYLDAAAPGIKDSMEGVSEAMPMDFNEEQVEDLAMNNEFIEDAQAPQTPGLVEVPNSSSVREQMACDDHMDVEDLNAEEGIKSSGELNANEMPKRGEDLSSEYNAPESAVTPVEVDKSQIDENVNTQNEPEEERAEHVHVTSPCCSHITTEMEDPGQVMNEAGANVVPDKPDAVPPLETPGEENRDHFAIATEVNQETDSSLQGDEQAYSRPDGQLNNAHETDEQLGNLTGFTDSDFPPPEKVLAVPNRQGDGNDFMVESTPDKEDPGTCNDDAGNNNITGKKRTFTESTLTAESLNSVESVGLIQSKRTADSVPDDDDLLSSILVGKSSFLKMRPTPVLEPATTKRLRSAPRSTATKRKVLMDDPMVLHGDIIRQQLTNTEDIRRVRKKAPCTVPEIVMLQRQALEDGLFKEPIFTGMSVELVSLHTEPYDLRGIMIIENDDRHASVGAVEDNECSVTAVEENKTEESSDPQAHPNDCEEQPGTAHTHPQEEQTINQQEELKDDNELAEKSDLEVLKEGNGAADEVNLVVIDDVSQIPSEEKLDRVEDLQVEESHENHDGEGGQDVCADPNEKSCTDVIEIAEGDTDINPIFNEMDLKVEDELPHEDEKTDASAEVSELGRDDQTPCDNTVGSTETGCLEAGDLSNMALENCNEPLVEANSDGLNPETESYNKYEPHNEMSNEEASMQNALDGEHTSRDGLMGDNDEMDTMENAHDTGFLNVDDDEVDEDHEEDDIQYDDETRLLENSGWSSRTRAVAKYLQTLFDKETENGKNVLVADKLLAGKTRKEASRMFFETLVLKTRDYIQVEQGKPYESIIIKPRPKLTKSIF.

A disordered region spans residues Thr461–Gly481. The Nuclear localization signal motif lies at Thr545–Pro552. 3 disordered regions span residues Val661–Lys703, Glu742–Asn772, and Glu803–Thr835. Composition is skewed to basic and acidic residues over residues Glu742–Glu762 and Glu803–Gln825.

The protein belongs to the rad21 family. In terms of assembly, component of the cohesin complex. In terms of tissue distribution, expressed in tissues containing dividing cells such as seedlings, flower buds, flowers and inflorescence meristem tissue.

It localises to the nucleus. It is found in the chromosome. The protein resides in the centromere. In terms of biological role, involved in sister chromatid and centromere cohesion during mitosis. The chain is Sister chromatid cohesion 1 protein 4 (SYN4) from Arabidopsis thaliana (Mouse-ear cress).